The primary structure comprises 539 residues: Acid-sensing ion channel 4 (539 aa).

The Cytoplasmic segment spans residues 1-68 (MPIEIVCKIK…GPGPHGLRRT (68 aa)). A helical membrane pass occupies residues 69–89 (LWALALLTSLAAFLYQAASLA). The Extracellular segment spans residues 90-438 (RGYLTRPHLV…EQQAAYGLSA (349 aa)). 2 disulfide bridges follow: Cys118–Cys202 and Cys180–Cys187. N-linked (GlcNAc...) asparagine glycans are attached at residues Asn191, Asn243, Asn341, and Asn376. Intrachain disulfides connect Cys296-Cys375, Cys318-Cys371, Cys322-Cys369, Cys331-Cys353, and Cys333-Cys345. The helical transmembrane segment at 439–459 (LLGDLGGQMGLFIGASILTLL) threads the bilayer. The GAS motif; ion selectivity filter motif lies at 452–454 (GAS). The Cytoplasmic portion of the chain corresponds to 460-539 (EILDYIYEVS…PGSLFEDFAC (80 aa)). The segment at 500–531 (KEQSPCPSRGRAEGGGASSLLPNHHHPHGPPG) is disordered.

Belongs to the amiloride-sensitive sodium channel (TC 1.A.6) family. ASIC4 subfamily. In terms of assembly, homotrimer. Heterotrimer; with other ASIC proteins producing functional channels.

Its subcellular location is the cell membrane. In terms of biological role, does not exhibit measurable stand-alone pH-gated sodium channel activity but may form pH-gated heterotrimeric sodium channels. Its activity could also depend on alternative gating mechanisms. This is Acid-sensing ion channel 4 from Mus musculus (Mouse).